A 325-amino-acid chain; its full sequence is Olfactory receptor 5T18 (325 aa).

At 1-22 the chain is on the extracellular side; that stretch reads MRNITEATFFVLKGLTDNNELQ. Asn-3 carries N-linked (GlcNAc...) asparagine glycosylation. A run of 2 helical transmembrane segments spans residues 23–43 and 44–64; these read IILF…NVGL and IILV…LSVL. The Extracellular segment spans residues 65–97; the sequence is SSVDACYSTDITPNMLVGFMSKSKIISFYGCAT. Cys-95 and Cys-187 are joined by a disulfide. The chain crosses the membrane as a helical span at residues 98–118; it reads QMFLAVTFGTTECFLLAAMAY. The Cytoplasmic segment spans residues 119 to 139; that stretch reads DRYVAIHDPLLYAVSMSPRVY. Residues 140–160 traverse the membrane as a helical segment; sequence IPLIIASYAGGIVHAIIHTVA. Topologically, residues 161 to 194 are extracellular; sequence TFSLSFCRSNEVKHIFCDIPPLLAISCSETYVNE. The helical transmembrane segment at 195 to 215 threads the bilayer; sequence LLLFFFVSFIELVTILIVLVS. The Cytoplasmic portion of the chain corresponds to 216-234; that stretch reads YAFILLSILKMNSSEGRRK. Residues 235–255 form a helical membrane-spanning segment; sequence VFSTCGAHLTAVSIYYGTILF. Residues 256-269 are Extracellular-facing; it reads MYVRPSSNYSLEHD. The helical transmembrane segment at 270 to 290 threads the bilayer; the sequence is MIVSTFYTIGIPMLNPIIYSL. Over 291-325 the chain is Cytoplasmic; that stretch reads RNKDVKEAMKRVLRKKINIKHRIKKLNDFSVFLMP.

The protein belongs to the G-protein coupled receptor 1 family.

It is found in the cell membrane. Functionally, potential odorant receptor. This Mus musculus (Mouse) protein is Olfactory receptor 5T18.